Consider the following 57-residue polypeptide: Probable antitoxin MazE1 (57 aa).

Forms a complex with cognate toxin MazF1.

Its function is as follows. Antitoxin component of a type II toxin-antitoxin (TA) system. The polypeptide is Probable antitoxin MazE1 (mazE1) (Mycobacterium tuberculosis (strain ATCC 25618 / H37Rv)).